The chain runs to 244 residues: DNA repair protein RecO (244 aa).

It belongs to the RecO family.

Functionally, involved in DNA repair and RecF pathway recombination. The protein is DNA repair protein RecO of Ehrlichia chaffeensis (strain ATCC CRL-10679 / Arkansas).